Here is an 826-residue protein sequence, read N- to C-terminus: Hyaluronate lyase HylA (826 aa).

The segment at residues 1-36 is a signal peptide (tat-type signal); the sequence is MFDIPYQVPSRRTFLSLSALSAIAIAASPEMPDAFA. Catalysis depends on residues H276, Y285, and R339. A disordered region spans residues 800 to 826; that stretch reads LSPALPKPTKPSLRASSYPLGLPHTSS.

Belongs to the polysaccharide lyase 8 family. Post-translationally, predicted to be exported by the Tat system. The position of the signal peptide cleavage has not been experimentally proven.

The protein resides in the secreted. The enzyme catalyses [hyaluronan](n) = n 3-(4-deoxy-beta-D-gluc-4-enuronosyl)-N-acetyl-D-glucosamine + H2O. Its function is as follows. Degrades hyaluronic acid (HA) into large-sized HA oligosaccharides, including tetrasaccharide HA (HA-4), hexasaccharide HA (HA-6) and higher molecular weight HA, and to a lesser extent into HA disaccharides (HA-2). Involved in the pathogenesis of acne. HA degradation products induce secretion of proinflammatory cytokines (IL-6, IL-8 and TNF-alpha) from human HaCaT keratinocyte cell line and from mouse bone marrow derived macrophages (BMDMs). Produced HA fragments also direct robust TLR2-dependent inflammation in the mouse model of acne. The sequence is that of Hyaluronate lyase HylA from Cutibacterium acnes (Propionibacterium acnes).